Consider the following 241-residue polypeptide: Small ribosomal subunit protein uS3 (241 aa).

A KH type-2 domain is found at 39-107; it reads MRKFVMDELK…ETHLNIVEVR (69 aa). Residues 214 to 241 form a disordered region; that stretch reads ASERRALEGDAQGPASRDRDRDRRRDNA. Residues 229–241 show a composition bias toward basic and acidic residues; sequence SRDRDRDRRRDNA.

Belongs to the universal ribosomal protein uS3 family. Part of the 30S ribosomal subunit. Forms a tight complex with proteins S10 and S14.

Binds the lower part of the 30S subunit head. Binds mRNA in the 70S ribosome, positioning it for translation. The polypeptide is Small ribosomal subunit protein uS3 (Rhizobium rhizogenes (strain K84 / ATCC BAA-868) (Agrobacterium radiobacter)).